We begin with the raw amino-acid sequence, 392 residues long: Pannexin-3 (392 aa).

Residues 1–39 (MSLAHTAAEYMLSDALLPDRRGSRLKGLRLELPLDKMVK) are Cytoplasmic-facing. Residues 40–60 (FVTVGFPLLLMSLAFAQEFSS) form a helical membrane-spanning segment. Topologically, residues 61–113 (GSPISCFSPSNFSVRQAVFVDSSCWDSLAHYKQDEAGQYTVKSLWPHKALPYS) are extracellular. An N-linked (GlcNAc...) asparagine glycan is attached at asparagine 71. A helical transmembrane segment spans residues 114–134 (LLALAVAMYLPVLLWQYAAVP). Residues 135–215 (ALSSDLLFII…VATYLLRNAL (81 aa)) are Cytoplasmic-facing. Residues 216–236 (LLLFTSATYLYLGHFHLDVFF) traverse the membrane as a helical segment. Residues 237-267 (QEEFSCSIKTGLLHEETHVPELITCRLTSLS) are Extracellular-facing. The chain crosses the membrane as a helical span at residues 268-288 (VFQIVSVSSVAIYTVLVPVII). The Cytoplasmic portion of the chain corresponds to 289–392 (YNLTRLCRWD…LTQHTYDEHP (104 aa)).

Belongs to the pannexin family. In terms of assembly, homoheptameric. Skin.

The protein resides in the cell membrane. The protein localises to the cell junction. It is found in the gap junction. Its subcellular location is the endoplasmic reticulum membrane. It catalyses the reaction Ca(2+)(in) = Ca(2+)(out). The enzyme catalyses ATP(in) = ATP(out). In terms of biological role, regulator of osteoblast differentiation by functionning as a Ca(2+) channel in the endoplasmic reticulum which regulates calmodulin (CaM) pathways. Allows ATP release into the extracellular space and activation or purinergic receptors. The sequence is that of Pannexin-3 (Panx3) from Rattus norvegicus (Rat).